Here is a 290-residue protein sequence, read N- to C-terminus: MADCSALESLIEMGFSPSRAEKALSATGNQGIEPAMDWLVEHEDDPDIKEPSVVIPEDSGTDTTDTTDTQAMDTSAERLPLTEEEKEKQTKRMMELIAQKQKEREEREKRERIEQEKQRRKHGQELSAIKQRMQEQEMQKAAEDRRREKQEERLARERVREKIARDKADRARKFGGAGSEPISPPAETSVPATAPSPSSPVQEPPTKKEYDQCRIQVRLLDGSALSQTFRAREQLAAVRLYVELNWPGGPPEPFSLLTSFPRRVFTEEDMEKPLQELGLVPTAVLIVAKK.

A UBA domain is found at 1–42 (MADCSALESLIEMGFSPSRAEKALSATGNQGIEPAMDWLVEH). Positions 49-210 (KEPSVVIPED…VQEPPTKKEY (162 aa)) are disordered. Basic and acidic residues-rich tracts occupy residues 80-117 (PLTEEEKEKQTKRMMELIAQKQKEREEREKRERIEQEK) and 132-172 (RMQE…DRAR). A coiled-coil region spans residues 81-171 (LTEEEKEKQT…KIARDKADRA (91 aa)). Residues 185-201 (PAETSVPATAPSPSSPV) show a composition bias toward low complexity. Residues 208–287 (KEYDQCRIQV…GLVPTAVLIV (80 aa)) enclose the UBX domain.

It localises to the cytoplasm. Component of a complex required to couple deglycosylation and proteasome-mediated degradation of misfolded proteins in the endoplasmic reticulum that are retrotranslocated in the cytosol. Involved in ubiquitin-proteasome systems. This Xenopus laevis (African clawed frog) protein is UBX domain-containing protein 1-B (ubxn1-b).